The chain runs to 265 residues: Insulin-like growth factor-binding protein 2-B (265 aa).

The N-terminal stretch at 1–17 is a signal peptide; that stretch reads MSLALLCSLLLVHGSLG. Positions 19 to 99 constitute an IGFBP N-terminal domain; it reads IVFRCPSCTA…IQGLGRCENK (81 aa). Cystine bridges form between C23/C49, C26/C51, C34/C52, C41/C55, C63/C76, and C70/C96. The segment covering 107–122 has biased composition (polar residues); that stretch reads TNQESAAHSGEVNGTR. Disordered stretches follow at residues 107 to 128 and 144 to 170; these read TNQE…PMKK and HHNN…SQCQ. The Thyroglobulin type-1 domain maps to 166–248; sequence QSQCQQELDK…SDKVRGDPNC (83 aa). 3 cysteine pairs are disulfide-bonded: C169–C203, C214–C225, and C227–C248. Residues 238–265 are disordered; sequence SSDKVRGDPNCSQYYGGPELEPPTAQQK. Positions 243-245 match the Cell attachment site motif; it reads RGD.

Interacts with igf2. Interacts with igf1. As to expression, in early embryos, expressed at a low level in most tissues with expression becoming abundant in the liver by 96 hours post-fertilization (hpf). The expression pattern in adults exhibits sexual dimorphism; in adult males expression is limited exclusively to the liver whereas in adult females expression is observed in the liver and other tissues including the gut, kidney, ovary and muscle.

It is found in the secreted. Functionally, IGF-binding proteins prolong the half-life of the IGFs and have been shown to either inhibit or stimulate the growth promoting effects of the IGFs on cell culture. They alter the interaction of IGFs with their cell surface receptors. The chain is Insulin-like growth factor-binding protein 2-B from Danio rerio (Zebrafish).